We begin with the raw amino-acid sequence, 344 residues long: UDP-N-acetylglucosamine--N-acetylmuramyl-(pentapeptide) pyrophosphoryl-undecaprenol N-acetylglucosamine transferase (344 aa).

UDP-N-acetyl-alpha-D-glucosamine contacts are provided by residues 9 to 11 (TGG), Asn-118, Arg-157, Ser-188, and Gln-282.

It belongs to the glycosyltransferase 28 family. MurG subfamily.

Its subcellular location is the cell inner membrane. It carries out the reaction di-trans,octa-cis-undecaprenyl diphospho-N-acetyl-alpha-D-muramoyl-L-alanyl-D-glutamyl-meso-2,6-diaminopimeloyl-D-alanyl-D-alanine + UDP-N-acetyl-alpha-D-glucosamine = di-trans,octa-cis-undecaprenyl diphospho-[N-acetyl-alpha-D-glucosaminyl-(1-&gt;4)]-N-acetyl-alpha-D-muramoyl-L-alanyl-D-glutamyl-meso-2,6-diaminopimeloyl-D-alanyl-D-alanine + UDP + H(+). The protein operates within cell wall biogenesis; peptidoglycan biosynthesis. Cell wall formation. Catalyzes the transfer of a GlcNAc subunit on undecaprenyl-pyrophosphoryl-MurNAc-pentapeptide (lipid intermediate I) to form undecaprenyl-pyrophosphoryl-MurNAc-(pentapeptide)GlcNAc (lipid intermediate II). The polypeptide is UDP-N-acetylglucosamine--N-acetylmuramyl-(pentapeptide) pyrophosphoryl-undecaprenol N-acetylglucosamine transferase (Aquifex aeolicus (strain VF5)).